Reading from the N-terminus, the 540-residue chain is 2,3-bisphosphoglycerate-independent phosphoglycerate mutase (540 aa).

Residues Asp25 and Ser75 each coordinate Mn(2+). Residue Ser75 is the Phosphoserine intermediate of the active site. Substrate contacts are provided by residues His136, 166–167, Arg198, Arg204, 269–272, and Lys342; these read RD and RPDR. Residues Asp409, His413, Asp450, His451, and His468 each contribute to the Mn(2+) site.

The protein belongs to the BPG-independent phosphoglycerate mutase family. Monomer. It depends on Mn(2+) as a cofactor.

It catalyses the reaction (2R)-2-phosphoglycerate = (2R)-3-phosphoglycerate. It functions in the pathway carbohydrate degradation; glycolysis; pyruvate from D-glyceraldehyde 3-phosphate: step 3/5. Catalyzes the interconversion of 2-phosphoglycerate and 3-phosphoglycerate. The sequence is that of 2,3-bisphosphoglycerate-independent phosphoglycerate mutase from Prochlorococcus marinus subsp. pastoris (strain CCMP1986 / NIES-2087 / MED4).